The following is a 163-amino-acid chain: Phosphopantetheine adenylyltransferase (163 aa).

Residue threonine 11 coordinates substrate. ATP contacts are provided by residues threonine 11–phenylalanine 12 and histidine 19. Substrate is bound by residues lysine 43, leucine 75, and arginine 89. ATP contacts are provided by residues glycine 90–arginine 92, glutamate 100, and tyrosine 125–threonine 131.

This sequence belongs to the bacterial CoaD family. Homohexamer. The cofactor is Mg(2+).

The protein resides in the cytoplasm. The catalysed reaction is (R)-4'-phosphopantetheine + ATP + H(+) = 3'-dephospho-CoA + diphosphate. Its pathway is cofactor biosynthesis; coenzyme A biosynthesis; CoA from (R)-pantothenate: step 4/5. Functionally, reversibly transfers an adenylyl group from ATP to 4'-phosphopantetheine, yielding dephospho-CoA (dPCoA) and pyrophosphate. The protein is Phosphopantetheine adenylyltransferase of Acinetobacter baylyi (strain ATCC 33305 / BD413 / ADP1).